Here is a 352-residue protein sequence, read N- to C-terminus: MHESSRLPVGIIGASGYGGVQLVRLLQDHPQLEVAYLGGDRSAGKEFAELYPHLGPHLNLTIEAIDVDRIAERCAAVFLSLPNGLAYDLAPALLERGCKVLDLSADYRFHDLKTYALWYGGDRQDAAVAHTAIYGLPELYRNRIANAQLIGCPGCYPTASLLALAPALKQGLIDPDTIVIDAKSGTSGAGRQAKTNALLAEAGNSVGAYGVARHRHTPEIEQICSDLSGHEVLLQFTPHLMPMVRGIHATIYAKLRDPNLTTEDCLTVYQAFYRNAPMVKVLTHGTYPQTKWAAGTNLCYLGLEVDARTGRIVLLSAIDNLIKGQAGQAIQCLNLMQGWEEGLGLPTLCYYP.

Cysteine 155 is a catalytic residue.

Belongs to the NAGSA dehydrogenase family. Type 1 subfamily.

The protein localises to the cytoplasm. It carries out the reaction N-acetyl-L-glutamate 5-semialdehyde + phosphate + NADP(+) = N-acetyl-L-glutamyl 5-phosphate + NADPH + H(+). Its pathway is amino-acid biosynthesis; L-arginine biosynthesis; N(2)-acetyl-L-ornithine from L-glutamate: step 3/4. Its function is as follows. Catalyzes the NADPH-dependent reduction of N-acetyl-5-glutamyl phosphate to yield N-acetyl-L-glutamate 5-semialdehyde. The polypeptide is N-acetyl-gamma-glutamyl-phosphate reductase (Synechococcus elongatus (strain ATCC 33912 / PCC 7942 / FACHB-805) (Anacystis nidulans R2)).